The following is a 421-amino-acid chain: MHIASVTSRCSRAGAEALRQGAQLAADARDTCRAGALLLRGSPCAIGWVAGWLSAEFPARVVTGHALSRISPRSIGRFGTSWAAQRADQILHAALVDAFGPDFRDLVWHPTGEQSEAARRSGLLNLPHIPGPHRRYAAQTSDIPYGPGGRENLLDIWRRPDLAPGRRAPVLIQVPGGAWTINGKRPQAYPLMSRMVELGWICVSINYSKSPRCTWPAHIVDVKRAIAWVRENIADYGGDPDFITITGGSAGAHLAALAALSANDPALQPGFESADTAVQAAAPYYGVYDLTNAENMHEMMMPFLEHFVMRSRYVDNPGLFKAASPISYVHSEAPPFFVLHGEKDPMVPSAQSRAFSAALRDAGAATVSYAELPNAHHAFDLAATVRSRMVAEAVSDFLGVIYGRRMGARKGSLALSSPPAS.

Catalysis depends on residues S249, D344, and H377.

Belongs to the 'GDXG' lipolytic enzyme family.

It catalyses the reaction hexadecanoate ester + H2O = an aliphatic alcohol + hexadecanoate + H(+). In terms of biological role, shows lipase activity. Is highly immunogenic and may play an important role in the virulence and pathogenesis of M.tuberculosis infection, by altering the balance of cytokines. Significantly down-regulates the expression level of pro-inflammatory cytokines (TNF-alpha and IFN-gamma) and up-regulates the level of anti-inflammatory cytokines such as IL-4 and IL-10 as compared to LPS stimulated macrophages. Also inhibits the expression of iNOS, TLR2 and transcription factor NF-kappa-B in LPS stimulated macrophages whereas the expression of TLR-4 remains unchanged. This chain is Esterase LipQ, found in Mycobacterium tuberculosis (strain ATCC 25618 / H37Rv).